The chain runs to 503 residues: E3 ubiquitin-protein ligase IE61 (503 aa).

The RING-type zinc-finger motif lies at Cys-19–Arg-58. 3 disordered regions span residues Ala-175–Arg-194, Ser-367–Asp-418, and Ala-445–Lys-503. Positions Gly-375–His-388 are enriched in polar residues. Low complexity predominate over residues Arg-389–Arg-403. The segment covering Arg-404–Arg-414 has biased composition (basic residues). The segment covering Pro-471–Pro-480 has biased composition (low complexity).

Interacts with host BTRC; this interaction seems to inactivate SCF-mediated protein degradation in general.

The catalysed reaction is S-ubiquitinyl-[E2 ubiquitin-conjugating enzyme]-L-cysteine + [acceptor protein]-L-lysine = [E2 ubiquitin-conjugating enzyme]-L-cysteine + N(6)-ubiquitinyl-[acceptor protein]-L-lysine.. RING-finger E3 ubiquitin ligase that degrades host SP100, one of the major components of ND10 nuclear bodies, thereby disrupting the organization of these bodies. Also plays a role in the inhibition of host NF-kappa-B pathway by blocking the SCF(BTRC)-mediated addition of ubiquitin chains to host IkappaBalpha/NFKBIA, thereby interfering with its degradation. The protein is E3 ubiquitin-protein ligase IE61 of Cercopithecine herpesvirus 9 (strain DHV) (CeHV-9).